The following is a 149-amino-acid chain: Deoxyuridine 5'-triphosphate nucleotidohydrolase (149 aa).

Substrate-binding positions include 68–70 (RSG), Asn81, and 85–87 (LID).

The protein belongs to the dUTPase family. Mg(2+) serves as cofactor.

It catalyses the reaction dUTP + H2O = dUMP + diphosphate + H(+). It functions in the pathway pyrimidine metabolism; dUMP biosynthesis; dUMP from dCTP (dUTP route): step 2/2. This enzyme is involved in nucleotide metabolism: it produces dUMP, the immediate precursor of thymidine nucleotides and it decreases the intracellular concentration of dUTP so that uracil cannot be incorporated into DNA. This is Deoxyuridine 5'-triphosphate nucleotidohydrolase from Laribacter hongkongensis (strain HLHK9).